We begin with the raw amino-acid sequence, 487 residues long: N-succinylglutamate 5-semialdehyde dehydrogenase (487 aa).

221–226 is an NAD(+) binding site; it reads GSSDTG. Residues Glu-244 and Cys-278 contribute to the active site.

It belongs to the aldehyde dehydrogenase family. AstD subfamily.

It catalyses the reaction N-succinyl-L-glutamate 5-semialdehyde + NAD(+) + H2O = N-succinyl-L-glutamate + NADH + 2 H(+). It participates in amino-acid degradation; L-arginine degradation via AST pathway; L-glutamate and succinate from L-arginine: step 4/5. In terms of biological role, catalyzes the NAD-dependent reduction of succinylglutamate semialdehyde into succinylglutamate. The sequence is that of N-succinylglutamate 5-semialdehyde dehydrogenase from Burkholderia orbicola (strain MC0-3).